Consider the following 133-residue polypeptide: Histone H2A (133 aa).

The segment covering 1-10 (MTGGKSGGKA) has biased composition (gly residues). A disordered region spans residues 1 to 25 (MTGGKSGGKASGSKSSQSRSSKAGL). K5 and K9 each carry N6-acetyllysine. Over residues 11–24 (SGSKSSQSRSSKAG) the composition is skewed to low complexity. Q106 carries the post-translational modification N5-methylglutamine. Phosphoserine is present on S130. Residues 130-131 (SQ) carry the [ST]-Q motif motif.

The protein belongs to the histone H2A family. In terms of assembly, the nucleosome is a histone octamer containing two molecules each of H2A, H2B, H3 and H4 assembled in one H3-H4 heterotetramer and two H2A-H2B heterodimers. The octamer wraps approximately 147 bp of DNA. Phosphorylated to form H2AS128ph (gamma-H2A) in response to DNA double-strand breaks (DSBs) generated by exogenous genotoxic agents and by stalled replication forks. Phosphorylation is dependent on the DNA damage checkpoint kinases MEC1/ATR and TEL1/ATM, spreads on either side of a detected DSB site and may mark the surrounding chromatin for recruitment of proteins required for DNA damage signaling and repair. Gamma-H2A is removed from the DNA prior to the strand invasion-primer extension step of the repair process and subsequently dephosphorylated. Dephosphorylation is necessary for efficient recovery from the DNA damage checkpoint. In terms of processing, acetylated by ESA1 to form H2AK4ac and H2AK7ac.

It localises to the nucleus. The protein resides in the chromosome. Functionally, core component of nucleosome which plays a central role in DNA double strand break (DSB) repair. Nucleosomes wrap and compact DNA into chromatin, limiting DNA accessibility to the cellular machineries which require DNA as a template. Histones thereby play a central role in transcription regulation, DNA repair, DNA replication and chromosomal stability. DNA accessibility is regulated via a complex set of post-translational modifications of histones, also called histone code, and nucleosome remodeling. This Coccidioides immitis (strain RS) (Valley fever fungus) protein is Histone H2A (HTA1).